We begin with the raw amino-acid sequence, 329 residues long: L-lactate dehydrogenase (329 aa).

NAD(+) is bound by residues V18, E39, K46, Y71, and 85–86 (GA). Positions 88 and 94 each coordinate substrate. NAD(+) is bound by residues S107, 124–126 (AAN), and S149. 126–129 (NPVD) serves as a coordination point for substrate. Residue 154–157 (DSAR) coordinates substrate. Residues R159 and H174 each coordinate beta-D-fructose 1,6-bisphosphate. The active-site Proton acceptor is the H181. A Phosphotyrosine modification is found at Y226. Residue T235 coordinates substrate.

This sequence belongs to the LDH/MDH superfamily. LDH family. As to quaternary structure, homotetramer.

It localises to the cytoplasm. It carries out the reaction (S)-lactate + NAD(+) = pyruvate + NADH + H(+). The protein operates within fermentation; pyruvate fermentation to lactate; (S)-lactate from pyruvate: step 1/1. Its activity is regulated as follows. Allosterically activated by fructose 1,6-bisphosphate (FBP). Functionally, catalyzes the conversion of lactate to pyruvate. The protein is L-lactate dehydrogenase of Streptococcus agalactiae serotype V (strain ATCC BAA-611 / 2603 V/R).